A 180-amino-acid chain; its full sequence is Beta-lactoglobulin-1 (180 aa).

An N-terminal signal peptide occupies residues 1-18; that stretch reads MKCLLLALGLALMCGIQA. 2 cysteine pairs are disulfide-bonded: Cys-84/Cys-178 and Cys-124/Cys-137.

Belongs to the calycin superfamily. Lipocalin family. As to quaternary structure, monomer.

The protein resides in the secreted. Functionally, lactoglobulin is the primary component of whey, it binds retinol and is probably involved in the transport of that molecule. The polypeptide is Beta-lactoglobulin-1 (LGB1) (Equus caballus (Horse)).